Consider the following 438-residue polypeptide: Indole diterpene prenyltransferase janD (438 aa).

80-81 (FM) provides a ligand contact to L-tryptophan. Substrate contacts are provided by Arg102, Lys190, Arg264, Lys266, Tyr268, Tyr350, Tyr414, and Tyr418.

Belongs to the tryptophan dimethylallyltransferase family.

The protein operates within secondary metabolite biosynthesis. In terms of biological role, indole diterpene prenyltransferase; part of the gene cluster that mediates the biosynthesis of the indole diterpenes janthitremanes such as shearinine K or shearinine A. The geranylgeranyl diphosphate (GGPP) synthase janG catalyzes the first step in janthitremane biosynthesis via conversion of farnesyl pyrophosphate and isopentyl pyrophosphate into geranylgeranyl pyrophosphate (GGPP). Condensation of indole-3-glycerol phosphate with GGPP by the prenyl transferase janC then forms 3-geranylgeranylindole (3-GGI). Epoxidation by the FAD-dependent monooxygenase janM leads to a epoxidized-GGI that is substrate of the terpene cyclase janB for cyclization to yield paspaline. Paspaline is subsequently converted to 13-desoxypaspaline by the cytochrome P450 monooxygenase janP, via beta-PC-M6 in a series of alpha-face oxidations. The cytochrome P450 monooxygenase janQ is proposed to carry out sequential beta-face oxidation steps at C-7 and C-13 of 13-desoxypaspaline to form paspalicine and paspalinine respectively. The indole diterpene prenyltransferase janD may then convert paspalinine into shearinine K which is substrate of janO and/or additional enzymes for oxidation and cyclization to generate shearinine A. This is Indole diterpene prenyltransferase janD from Penicillium janthinellum (Penicillium vitale).